Here is a 154-residue protein sequence, read N- to C-terminus: ATP synthase subunit b (154 aa).

Residues 5–27 traverse the membrane as a helical segment; it reads LLGQAIAFTLFVWFCMKYVWPPI.

This sequence belongs to the ATPase B chain family. As to quaternary structure, F-type ATPases have 2 components, F(1) - the catalytic core - and F(0) - the membrane proton channel. F(1) has five subunits: alpha(3), beta(3), gamma(1), delta(1), epsilon(1). F(0) has three main subunits: a(1), b(2) and c(10-14). The alpha and beta chains form an alternating ring which encloses part of the gamma chain. F(1) is attached to F(0) by a central stalk formed by the gamma and epsilon chains, while a peripheral stalk is formed by the delta and b chains.

It localises to the cell inner membrane. F(1)F(0) ATP synthase produces ATP from ADP in the presence of a proton or sodium gradient. F-type ATPases consist of two structural domains, F(1) containing the extramembraneous catalytic core and F(0) containing the membrane proton channel, linked together by a central stalk and a peripheral stalk. During catalysis, ATP synthesis in the catalytic domain of F(1) is coupled via a rotary mechanism of the central stalk subunits to proton translocation. Functionally, component of the F(0) channel, it forms part of the peripheral stalk, linking F(1) to F(0). The chain is ATP synthase subunit b from Aliivibrio fischeri (strain ATCC 700601 / ES114) (Vibrio fischeri).